Reading from the N-terminus, the 229-residue chain is Aquaporin Z (229 aa).

2 consecutive transmembrane segments (helical) span residues 8 to 28 and 33 to 53; these read FLGT…AAGF and IGFA…AYAI. The NPA 1 signature appears at 62–64; sequence NPA. The next 3 helical transmembrane spans lie at 88–108, 129–149, and 158–178; these read VLGA…GAGF, LLAA…VIMG, and GFAP…SIPV. The NPA 2 signature appears at 184 to 186; the sequence is NPA. A helical transmembrane segment spans residues 192–212; sequence ALFVGGWAVQQLWLFWLAPII.

It belongs to the MIP/aquaporin (TC 1.A.8) family. Homotetramer.

The protein localises to the cell inner membrane. It catalyses the reaction H2O(in) = H2O(out). In terms of biological role, channel that permits osmotically driven movement of water in both directions. It is involved in the osmoregulation and in the maintenance of cell turgor during volume expansion in rapidly growing cells. It mediates rapid entry or exit of water in response to abrupt changes in osmolarity. In Chromobacterium violaceum (strain ATCC 12472 / DSM 30191 / JCM 1249 / CCUG 213 / NBRC 12614 / NCIMB 9131 / NCTC 9757 / MK), this protein is Aquaporin Z.